Reading from the N-terminus, the 62-residue chain is Translational regulator CsrA (62 aa).

The protein belongs to the CsrA/RsmA family. Homodimer; the beta-strands of each monomer intercalate to form a hydrophobic core, while the alpha-helices form wings that extend away from the core.

It localises to the cytoplasm. A key translational regulator that binds mRNA to regulate translation initiation and/or mRNA stability. Mediates global changes in gene expression, shifting from rapid growth to stress survival by linking envelope stress, the stringent response and the catabolite repression systems. Usually binds in the 5'-UTR; binding at or near the Shine-Dalgarno sequence prevents ribosome-binding, repressing translation, binding elsewhere in the 5'-UTR can activate translation and/or stabilize the mRNA. Its function is antagonized by small RNA(s). In Haemophilus ducreyi (strain 35000HP / ATCC 700724), this protein is Translational regulator CsrA.